The chain runs to 806 residues: Leucine--tRNA ligase (806 aa).

A 'HIGH' region motif is present at residues 40 to 51 (PYPSGQGLHVGH). The short motif at 578 to 582 (KMSKS) is the 'KMSKS' region element. Residue Lys581 coordinates ATP.

This sequence belongs to the class-I aminoacyl-tRNA synthetase family.

Its subcellular location is the cytoplasm. The catalysed reaction is tRNA(Leu) + L-leucine + ATP = L-leucyl-tRNA(Leu) + AMP + diphosphate. The sequence is that of Leucine--tRNA ligase from Limosilactobacillus reuteri (strain DSM 20016) (Lactobacillus reuteri).